The sequence spans 369 residues: Phospho-N-acetylmuramoyl-pentapeptide-transferase (369 aa).

The next 10 membrane-spanning stretches (helical) occupy residues 2–22, 55–75, 86–106, 120–140, 163–183, 196–216, 239–259, 266–286, 291–311, and 348–368; these read IALL…TPLF, TVVV…MWMM, GLLL…DDFI, AKLI…LQFP, LAFG…NLII, LDGL…IMGI, PMDL…FLWW, IFMG…FAIL, LLLA…IIQV, and ILAG…WVVL.

Belongs to the glycosyltransferase 4 family. MraY subfamily. Requires Mg(2+) as cofactor.

The protein localises to the cell membrane. It carries out the reaction UDP-N-acetyl-alpha-D-muramoyl-L-alanyl-gamma-D-glutamyl-meso-2,6-diaminopimeloyl-D-alanyl-D-alanine + di-trans,octa-cis-undecaprenyl phosphate = di-trans,octa-cis-undecaprenyl diphospho-N-acetyl-alpha-D-muramoyl-L-alanyl-D-glutamyl-meso-2,6-diaminopimeloyl-D-alanyl-D-alanine + UMP. Its pathway is cell wall biogenesis; peptidoglycan biosynthesis. Catalyzes the initial step of the lipid cycle reactions in the biosynthesis of the cell wall peptidoglycan: transfers peptidoglycan precursor phospho-MurNAc-pentapeptide from UDP-MurNAc-pentapeptide onto the lipid carrier undecaprenyl phosphate, yielding undecaprenyl-pyrophosphoryl-MurNAc-pentapeptide, known as lipid I. The chain is Phospho-N-acetylmuramoyl-pentapeptide-transferase from Paenarthrobacter aurescens (strain TC1).